A 199-amino-acid chain; its full sequence is ATP-dependent Clp protease proteolytic subunit 3 (199 aa).

The active-site Nucleophile is Ser-101. His-126 is an active-site residue.

This sequence belongs to the peptidase S14 family. Fourteen ClpP subunits assemble into 2 heptameric rings which stack back to back to give a disk-like structure with a central cavity, resembling the structure of eukaryotic proteasomes.

The protein resides in the cytoplasm. It catalyses the reaction Hydrolysis of proteins to small peptides in the presence of ATP and magnesium. alpha-casein is the usual test substrate. In the absence of ATP, only oligopeptides shorter than five residues are hydrolyzed (such as succinyl-Leu-Tyr-|-NHMec, and Leu-Tyr-Leu-|-Tyr-Trp, in which cleavage of the -Tyr-|-Leu- and -Tyr-|-Trp bonds also occurs).. In terms of biological role, cleaves peptides in various proteins in a process that requires ATP hydrolysis. Has a chymotrypsin-like activity. Plays a major role in the degradation of misfolded proteins. The protein is ATP-dependent Clp protease proteolytic subunit 3 of Synechococcus elongatus (strain ATCC 33912 / PCC 7942 / FACHB-805) (Anacystis nidulans R2).